Consider the following 268-residue polypeptide: Indole-3-glycerol phosphate synthase (268 aa).

The protein belongs to the TrpC family.

The catalysed reaction is 1-(2-carboxyphenylamino)-1-deoxy-D-ribulose 5-phosphate + H(+) = (1S,2R)-1-C-(indol-3-yl)glycerol 3-phosphate + CO2 + H2O. It functions in the pathway amino-acid biosynthesis; L-tryptophan biosynthesis; L-tryptophan from chorismate: step 4/5. This Micrococcus luteus (strain ATCC 4698 / DSM 20030 / JCM 1464 / CCM 169 / CCUG 5858 / IAM 1056 / NBRC 3333 / NCIMB 9278 / NCTC 2665 / VKM Ac-2230) (Micrococcus lysodeikticus) protein is Indole-3-glycerol phosphate synthase.